Here is a 153-residue protein sequence, read N- to C-terminus: Replicase large subunit (153 aa).

This sequence belongs to the tobamovirus RNA-directed RNA polymerase family.

It catalyses the reaction RNA(n) + a ribonucleoside 5'-triphosphate = RNA(n+1) + diphosphate. Its function is as follows. The replicase large subunit is an RNA-dependent RNA polymerase active in viral RNA replication. In Citrullus (Cucumber), this protein is Replicase large subunit.